The primary structure comprises 77 residues: MSRVCQVTGKGPVTGNNISHANNKTRRRFLPNLQHHRFWVEEEKRFVRLRVSAKGMRIIDKRGITVVLAEIRAAGKI.

The tract at residues 1-20 (MSRVCQVTGKGPVTGNNISH) is disordered.

This sequence belongs to the bacterial ribosomal protein bL28 family.

In Pseudomonas fluorescens (strain SBW25), this protein is Large ribosomal subunit protein bL28.